We begin with the raw amino-acid sequence, 196 residues long: MYDYIKGKLSKITAKFIVVETAGLGYMIYVANPYSFSGYVNQEVTIYLHQVIRDDAHLLFGFHTENEKEIFLNLISVSGIGPTTALAIIAVDDNEGLVSAIDNSDIKYLTKFPKIGKKTAQQMILDLSGKFVEASGESATSRKVSSEQNSNLEEAMEALLALGYKATELKKVKAFFEGTNETVEQYIKSSLKMLMK.

The segment at 1–63 is domain I; it reads MYDYIKGKLS…DDAHLLFGFH (63 aa). Positions 64–142 are domain II; the sequence is TENEKEIFLN…EASGESATSR (79 aa). A flexible linker region spans residues 143–148; that stretch reads KVSSEQ. The tract at residues 148-196 is domain III; sequence QNSNLEEAMEALLALGYKATELKKVKAFFEGTNETVEQYIKSSLKMLMK.

The protein belongs to the RuvA family. In terms of assembly, homotetramer. Forms an RuvA(8)-RuvB(12)-Holliday junction (HJ) complex. HJ DNA is sandwiched between 2 RuvA tetramers; dsDNA enters through RuvA and exits via RuvB. An RuvB hexamer assembles on each DNA strand where it exits the tetramer. Each RuvB hexamer is contacted by two RuvA subunits (via domain III) on 2 adjacent RuvB subunits; this complex drives branch migration. In the full resolvosome a probable DNA-RuvA(4)-RuvB(12)-RuvC(2) complex forms which resolves the HJ.

It localises to the cytoplasm. Its function is as follows. The RuvA-RuvB-RuvC complex processes Holliday junction (HJ) DNA during genetic recombination and DNA repair, while the RuvA-RuvB complex plays an important role in the rescue of blocked DNA replication forks via replication fork reversal (RFR). RuvA specifically binds to HJ cruciform DNA, conferring on it an open structure. The RuvB hexamer acts as an ATP-dependent pump, pulling dsDNA into and through the RuvAB complex. HJ branch migration allows RuvC to scan DNA until it finds its consensus sequence, where it cleaves and resolves the cruciform DNA. This chain is Holliday junction branch migration complex subunit RuvA, found in Streptococcus agalactiae serotype III (strain NEM316).